A 1250-amino-acid polypeptide reads, in one-letter code: DNA-directed RNA polymerase subunit beta'' (1250 aa).

Residues cysteine 224, cysteine 314, cysteine 321, and cysteine 324 each contribute to the Zn(2+) site.

The protein belongs to the RNA polymerase beta' chain family. RpoC2 subfamily. In plastids the minimal PEP RNA polymerase catalytic core is composed of four subunits: alpha, beta, beta', and beta''. When a (nuclear-encoded) sigma factor is associated with the core the holoenzyme is formed, which can initiate transcription. Zn(2+) is required as a cofactor.

It localises to the plastid. The protein localises to the chloroplast. It catalyses the reaction RNA(n) + a ribonucleoside 5'-triphosphate = RNA(n+1) + diphosphate. DNA-dependent RNA polymerase catalyzes the transcription of DNA into RNA using the four ribonucleoside triphosphates as substrates. This is DNA-directed RNA polymerase subunit beta'' from Staurastrum punctulatum (Green alga).